The following is a 205-amino-acid chain: Large ribosomal subunit protein uL3c (205 aa).

The tract at residues 127–153 is disordered; the sequence is HFSRGPMSHGSKNHRQPGSIGAGTTPG.

Belongs to the universal ribosomal protein uL3 family. In terms of assembly, part of the 50S ribosomal subunit.

The protein resides in the plastid. Its subcellular location is the chloroplast. One of the primary rRNA binding proteins, it binds directly near the 3'-end of the 23S rRNA, where it nucleates assembly of the 50S subunit. The polypeptide is Large ribosomal subunit protein uL3c (rpl3) (Porphyra purpurea (Red seaweed)).